Reading from the N-terminus, the 577-residue chain is MNKLYIGNLNESVTPADLEKVFAEHKISYSGQFLVKSGYAFVDCPDEHWAMKAIETFSGKVELQGKRLEIEHSVPKKQRSRKIQIRNIPPQLRWEVLDSLLAQYGTVENCEQVNTESETAVVNVTYSNREQTRQAIMKLNGHQLENHALKVSYIPDEQIAQGPENGRRGGFGSRGQPRQGSPVAAGAPAKQQQVDIPLRLLVPTQYVGAIIGKEGATIRNITKQTQSKIDVHRKENAGAAEKAISVHSTPEGCSSACKMILEIMHKEAKDTKTADEVPLKILAHNNFVGRLIGKEGRNLKKVEQDTETKITISSLQDLTLYNPERTITVKGAIENCCRAEQEIMKKVREAYENDVAAMSLQSHLIPGLNLAAVGLFPASSSAVPPPPSSVTGAAPYSSFMQAPEQEMVQVFIPAQAVGAIIGKKGQHIKQLSRFASASIKIAPPETPDSKVRMVIITGPPEAQFKAQGRIYGKLKEENFFGPKEEVKLETHIRVPASAAGRVIGKGGKTVNELQNLTAAEVVVPRDQTPDENDQVIVKIIGHFYASQMAQRKIRDILAQVKQQHQKGQSNQAQARRK.

2 consecutive RRM domains span residues 2-75 (NKLY…HSVP) and 81-156 (RKIQ…YIPD). Residues S12 and S73 each carry the phosphoserine modification. Residues 160 to 190 (AQGPENGRRGGFGSRGQPRQGSPVAAGAPAK) are disordered. S181 bears the Phosphoserine mark. KH domains lie at 195–260 (DIPL…CKMI), 276–343 (EVPL…EQEI), 405–470 (QEMV…QGRI), and 487–553 (KLET…QRKI). Residues 310-324 (ITISSLQDLTLYNPE) form a sufficient for nuclear export region. Residues 485–495 (EVKLETHIRVP) are sufficient for nuclear export. T528 carries the phosphothreonine modification.

This sequence belongs to the RRM IMP/VICKZ family. In terms of assembly, can form homodimers and heterodimers with IGF2BP1 and IGF2BP3. Component of the coding region determinant (CRD)-mediated complex, composed of DHX9, HNRNPU, IGF2BP1, SYNCRIP and YBX1. During HCV infection, identified in a HCV IRES-mediated translation complex, at least composed of EIF3C, IGF2BP1, RPS3 and HCV RNA-replicon. Interacts (via the KH domains) with HIV-1 GAG (via the second zinc finger motif of NC). Associates (via the RRM domains and KH domains) with HIV-1 particles. Identified in a mRNP complex, composed of at least DHX9, DDX3X, ELAVL1, HNRNPU, IGF2BP1, ILF3, PABPC1, PCBP2, PTBP2, STAU1, STAU2, SYNCRIP and YBX1. Identified in a IGF2BP1-dependent mRNP granule complex containing untranslated mRNAs. Interacts with DHX9, ELAVL2, HNRNPA2B1, HNRNPC, HNRNPH1, HNRNPU, IGF2BP2, ILF2, and YBX1. Interacts with FMR1. Component of a multisubunit autoregulatory RNP complex (ARC), at least composed of IGF2BP1, PABPC1 and CSDE1/UNR. Directly interacts with PABPC1. Component of a TAU mRNP complex, at least composed of IGF2BP1, ELAVL4 and G3BP. Interacts with ELAVL4 in an RNA-dependent manner. Associates with microtubules and polysomes. Interacts with AGO1 and AGO2. Interacts with ELAVL1 and MATR3. Interacts (via KH3 and KH4 domains) with SEPIN14P20 peptide RBRP; the interaction results in increased binding of IGF2BP1 to N6-methyladenosine (m6A)-containing mRNAs. In terms of processing, phosphorylated at Ser-181 by mTORC2 cotranslationally, promoting binding to the 3'-UTR of IGF2 mRNA. In terms of tissue distribution, mainly expressed in the embryo, including in fetal liver, fetal lung, fetal kidney, fetal thymus (at protein level). Also expressed follicles of ovary, as well as in gonocytes of testis, spermatogonia, semen, oocytes and placenta (at protein level). Expressed in various cancers, including testis and lung cancers (at protein level), as well as kidney, prostate and trachea cancers.

The protein resides in the nucleus. Its subcellular location is the cytoplasm. It is found in the perinuclear region. The protein localises to the P-body. It localises to the stress granule. The protein resides in the cell projection. Its subcellular location is the lamellipodium. It is found in the dendrite. The protein localises to the dendritic spine. It localises to the growth cone. The protein resides in the filopodium. Its subcellular location is the axon. Its function is as follows. RNA-binding factor that recruits target transcripts to cytoplasmic protein-RNA complexes (mRNPs). This transcript 'caging' into mRNPs allows mRNA transport and transient storage. It also modulates the rate and location at which target transcripts encounter the translational apparatus and shields them from endonuclease attacks or microRNA-mediated degradation. Preferentially binds to N6-methyladenosine (m6A)-containing mRNAs and increases their stability. Plays a direct role in the transport and translation of transcripts required for axonal regeneration in adult sensory neurons. Regulates localized beta-actin/ACTB mRNA translation, a crucial process for cell polarity, cell migration and neurite outgrowth. Co-transcriptionally associates with the ACTB mRNA in the nucleus. This binding involves a conserved 54-nucleotide element in the ACTB mRNA 3'-UTR, known as the 'zipcode'. The RNP thus formed is exported to the cytoplasm, binds to a motor protein and is transported along the cytoskeleton to the cell periphery. During transport, prevents ACTB mRNA from being translated into protein. When the RNP complex reaches its destination near the plasma membrane, IGF2BP1 is phosphorylated. This releases the mRNA, allowing ribosomal 40S and 60S subunits to assemble and initiate ACTB protein synthesis. Monomeric ACTB then assembles into the subcortical actin cytoskeleton. During neuronal development, key regulator of neurite outgrowth, growth cone guidance and neuronal cell migration, presumably through the spatiotemporal fine tuning of protein synthesis, such as that of ACTB. May regulate mRNA transport to activated synapses. Binds to and stabilizes ABCB1/MDR-1 mRNA. During interstinal wound repair, interacts with and stabilizes PTGS2 transcript. PTGS2 mRNA stabilization may be crucial for colonic mucosal wound healing. Binds to the 3'-UTR of IGF2 mRNA by a mechanism of cooperative and sequential dimerization and regulates IGF2 mRNA subcellular localization and translation. Binds to MYC mRNA, in the coding region instability determinant (CRD) of the open reading frame (ORF), hence preventing MYC cleavage by endonucleases and possibly microRNA targeting to MYC-CRD. Binding to MYC mRNA is enhanced by m6A-modification of the CRD. Binds to the 3'-UTR of CD44 mRNA and stabilizes it, hence promotes cell adhesion and invadopodia formation in cancer cells. Binds to the oncofetal H19 transcript and to the neuron-specific TAU mRNA and regulates their localizations. Binds to and stabilizes BTRC/FBW1A mRNA. Binds to the adenine-rich autoregulatory sequence (ARS) located in PABPC1 mRNA and represses its translation. PABPC1 mRNA-binding is stimulated by PABPC1 protein. Prevents BTRC/FBW1A mRNA degradation by disrupting microRNA-dependent interaction with AGO2. Promotes the directed movement of tumor-derived cells by fine-tuning intracellular signaling networks. Binds to MAPK4 3'-UTR and inhibits its translation. Interacts with PTEN transcript open reading frame (ORF) and prevents mRNA decay. This combined action on MAPK4 (down-regulation) and PTEN (up-regulation) antagonizes HSPB1 phosphorylation, consequently it prevents G-actin sequestration by phosphorylated HSPB1, allowing F-actin polymerization. Hence enhances the velocity of cell migration and stimulates directed cell migration by PTEN-modulated polarization. Interacts with Hepatitis C virus (HCV) 5'-UTR and 3'-UTR and specifically enhances translation at the HCV IRES, but not 5'-cap-dependent translation, possibly by recruiting eIF3. Interacts with HIV-1 GAG protein and blocks the formation of infectious HIV-1 particles. Reduces HIV-1 assembly by inhibiting viral RNA packaging, as well as assembly and processing of GAG protein on cellular membranes. During cellular stress, such as oxidative stress or heat shock, stabilizes target mRNAs that are recruited to stress granules, including CD44, IGF2, MAPK4, MYC, PTEN, RAPGEF2 and RPS6KA5 transcripts. This chain is Insulin-like growth factor 2 mRNA-binding protein 1 (IGF2BP1), found in Homo sapiens (Human).